A 378-amino-acid chain; its full sequence is Galanin receptor 2b (378 aa).

The Extracellular segment spans residues 1 to 30 (MSDHEDLNKAMGHWNASESYQLNPASVIVS). Residues 31–51 (VVFSLIFLLGTIGNSLVLAVL) traverse the membrane as a helical segment. Over 52-62 (LRSGQVGYNTT) the chain is Cytoplasmic. Residues 63–83 (NLFILNLSVADFFFIIFCVPF) form a helical membrane-spanning segment. The Extracellular segment spans residues 84–101 (QATIYSLEGWVFGSFMCK). An intrachain disulfide couples Cys-100 to Cys-177. A helical membrane pass occupies residues 102-123 (VVHFFINLTMYASSFTLAAVSV). Topologically, residues 124–143 (DRYLAIRYPLRSRELRTPCN) are cytoplasmic. Residues 144-164 (AVVAMVVIWGLSLVFAGPYLS) form a helical membrane-spanning segment. At 165–187 (YYDLIDFENSNVCVPGWEEHNRK) the chain is on the extracellular side. A helical transmembrane segment spans residues 188-208 (VLDTCTFVFGYVIPVLIVSLS). The Cytoplasmic portion of the chain corresponds to 209–238 (YTRTIKYLWTAVDPLDGMSESKRAKRKVTK). A helical transmembrane segment spans residues 239–259 (MIIIVTVLFCICWLPYHVVIL). The Extracellular segment spans residues 260-276 (CYLYGDFPFNQTTYAFR). A helical membrane pass occupies residues 277-297 (LLSHCMAYANSCLNPIVYALV). At 298–378 (SKHFRKGFKK…TITLPFQNQP (81 aa)) the chain is on the cytoplasmic side. The disordered stretch occupies residues 339 to 362 (EVSQMNEENARQNESEMVNRPLAQ).

It belongs to the G-protein coupled receptor 1 family. As to expression, expressed in neurons in the ventral area of the interpeduncular nucleus (IPN) where expression often overlaps with spx1.

Its subcellular location is the membrane. Receptor for the hormone galanin. Receptor for the hormones spexin-1 and spexin-2. This chain is Galanin receptor 2b, found in Danio rerio (Zebrafish).